The following is a 342-amino-acid chain: MENILDFTLEELKEWLISKEEKAFRAKQVFDWIYNKLIFDFNNMKNIPYKTKNLLSDNFYIGVPKVVKKLMSQDKNTYKFLFEYNDGNIIESVVMKYKHGNSICVSTQVGCRMGCKFCASTLDGVIRNLTSGEILSQIMAAQKEIGERISNVVLMGSGEPLDNFKNVTEFLDLVTSDTTLNIGQRHITLSTCGIVPKIKELADKNYNITLAISLHSPEDLLRKEMMPIANKYSIKELMEACDYYINKTNRRITFEYALVKGKNDSIKEAKKLSTVLKGKLCHVNLIPVNEIKENSYEKSTLKNIESFGNILKENGIETTIRREMGADINAACGQLRRSYVSK.

The active-site Proton acceptor is the E91. In terms of domain architecture, Radical SAM core spans 97–327 (YKHGNSICVS…TTIRREMGAD (231 aa)). C104 and C332 are joined by a disulfide. C111, C115, and C118 together coordinate [4Fe-4S] cluster. S-adenosyl-L-methionine is bound by residues 158-159 (GE), S190, 213-215 (SLH), and N289. Catalysis depends on C332, which acts as the S-methylcysteine intermediate.

The protein belongs to the radical SAM superfamily. RlmN family. [4Fe-4S] cluster is required as a cofactor.

The protein resides in the cytoplasm. The catalysed reaction is adenosine(2503) in 23S rRNA + 2 reduced [2Fe-2S]-[ferredoxin] + 2 S-adenosyl-L-methionine = 2-methyladenosine(2503) in 23S rRNA + 5'-deoxyadenosine + L-methionine + 2 oxidized [2Fe-2S]-[ferredoxin] + S-adenosyl-L-homocysteine. It carries out the reaction adenosine(37) in tRNA + 2 reduced [2Fe-2S]-[ferredoxin] + 2 S-adenosyl-L-methionine = 2-methyladenosine(37) in tRNA + 5'-deoxyadenosine + L-methionine + 2 oxidized [2Fe-2S]-[ferredoxin] + S-adenosyl-L-homocysteine. Specifically methylates position 2 of adenine 2503 in 23S rRNA and position 2 of adenine 37 in tRNAs. The protein is Probable dual-specificity RNA methyltransferase RlmN of Clostridium botulinum (strain Loch Maree / Type A3).